We begin with the raw amino-acid sequence, 717 residues long: Fatty acid oxidation complex subunit alpha (717 aa).

Residues 1–189 (MIYQSPTIEV…NVGAIDALVA (189 aa)) form an enoyl-CoA hydratase/isomerase region. D296 contributes to the substrate binding site. Residues 311-717 (KKVNSAAVLG…ANNGSYYQQA (407 aa)) form a 3-hydroxyacyl-CoA dehydrogenase region. NAD(+) is bound by residues M324, D343, 400–402 (VVE), K407, and S429. The active-site For 3-hydroxyacyl-CoA dehydrogenase activity is the H450. Residue N453 participates in NAD(+) binding. The substrate site is built by N500 and Y660.

It in the N-terminal section; belongs to the enoyl-CoA hydratase/isomerase family. This sequence in the C-terminal section; belongs to the 3-hydroxyacyl-CoA dehydrogenase family. As to quaternary structure, heterotetramer of two alpha chains (FadB) and two beta chains (FadA).

The catalysed reaction is a (3S)-3-hydroxyacyl-CoA + NAD(+) = a 3-oxoacyl-CoA + NADH + H(+). It catalyses the reaction a (3S)-3-hydroxyacyl-CoA = a (2E)-enoyl-CoA + H2O. It carries out the reaction a 4-saturated-(3S)-3-hydroxyacyl-CoA = a (3E)-enoyl-CoA + H2O. The enzyme catalyses (3S)-3-hydroxybutanoyl-CoA = (3R)-3-hydroxybutanoyl-CoA. The catalysed reaction is a (3Z)-enoyl-CoA = a 4-saturated (2E)-enoyl-CoA. It catalyses the reaction a (3E)-enoyl-CoA = a 4-saturated (2E)-enoyl-CoA. The protein operates within lipid metabolism; fatty acid beta-oxidation. Involved in the aerobic and anaerobic degradation of long-chain fatty acids via beta-oxidation cycle. Catalyzes the formation of 3-oxoacyl-CoA from enoyl-CoA via L-3-hydroxyacyl-CoA. It can also use D-3-hydroxyacyl-CoA and cis-3-enoyl-CoA as substrate. The chain is Fatty acid oxidation complex subunit alpha from Shewanella piezotolerans (strain WP3 / JCM 13877).